Consider the following 217-residue polypeptide: Cytidylate kinase (217 aa).

9-17 (GPSSSGKSS) is a binding site for ATP.

The protein belongs to the cytidylate kinase family. Type 1 subfamily.

It is found in the cytoplasm. The enzyme catalyses CMP + ATP = CDP + ADP. It catalyses the reaction dCMP + ATP = dCDP + ADP. In Mycoplasma pneumoniae (strain ATCC 29342 / M129 / Subtype 1) (Mycoplasmoides pneumoniae), this protein is Cytidylate kinase.